Reading from the N-terminus, the 447-residue chain is Phosphoglucosamine mutase (447 aa).

Catalysis depends on S106, which acts as the Phosphoserine intermediate. Mg(2+) is bound by residues S106, D245, D247, and D249. S106 bears the Phosphoserine mark.

This sequence belongs to the phosphohexose mutase family. It depends on Mg(2+) as a cofactor. In terms of processing, activated by phosphorylation.

It catalyses the reaction alpha-D-glucosamine 1-phosphate = D-glucosamine 6-phosphate. Functionally, catalyzes the conversion of glucosamine-6-phosphate to glucosamine-1-phosphate. The protein is Phosphoglucosamine mutase of Cupriavidus taiwanensis (strain DSM 17343 / BCRC 17206 / CCUG 44338 / CIP 107171 / LMG 19424 / R1) (Ralstonia taiwanensis (strain LMG 19424)).